A 253-amino-acid polypeptide reads, in one-letter code: Uridylate kinase (253 aa).

Lys-9–Gly-12 lines the ATP pocket. Position 51 (Gly-51) interacts with UMP. ATP-binding residues include Gly-52 and Arg-56. Residues Asp-72 and Ser-133–Thr-140 contribute to the UMP site. The ATP site is built by Thr-160, Tyr-166, and Asp-169.

The protein belongs to the UMP kinase family. As to quaternary structure, homohexamer.

Its subcellular location is the cytoplasm. It catalyses the reaction UMP + ATP = UDP + ADP. The protein operates within pyrimidine metabolism; CTP biosynthesis via de novo pathway; UDP from UMP (UMPK route): step 1/1. Inhibited by UTP. In terms of biological role, catalyzes the reversible phosphorylation of UMP to UDP. The protein is Uridylate kinase of Synechococcus sp. (strain JA-2-3B'a(2-13)) (Cyanobacteria bacterium Yellowstone B-Prime).